The chain runs to 267 residues: tRNA pseudouridine synthase A (267 aa).

The active-site Nucleophile is Asp-51. Substrate is bound at residue Tyr-109.

The protein belongs to the tRNA pseudouridine synthase TruA family. Homodimer.

The catalysed reaction is uridine(38/39/40) in tRNA = pseudouridine(38/39/40) in tRNA. Its function is as follows. Formation of pseudouridine at positions 38, 39 and 40 in the anticodon stem and loop of transfer RNAs. This chain is tRNA pseudouridine synthase A, found in Staphylococcus aureus (strain MSSA476).